A 576-amino-acid polypeptide reads, in one-letter code: uncharacterized protein (576 aa).

The protein belongs to the chlamydial CPn_0065/CT_288/TC_0561 family.

This is an uncharacterized protein from Chlamydia pneumoniae (Chlamydophila pneumoniae).